Consider the following 832-residue polypeptide: Mechanosensitive cation channel TMEM63B (832 aa).

At 1–40 the chain is on the extracellular side; it reads MLPFLLATLGTAALNSSNPKDYCYSARIRSTVLQGLPFGG. Residues 41 to 65 traverse the membrane as a helical segment; it reads VPTVLALDFMCFLALLFLFSILRKV. The S-palmitoyl cysteine moiety is linked to residue C51. Residues 66–145 lie on the Cytoplasmic side of the membrane; that stretch reads AWDYGRLALV…KDDEIRDKCG (80 aa). The Mediates endoplasmic reticulum retention motif lies at 86–88; the sequence is RER. S111, S113, S114, and S115 each carry phosphoserine. The S-palmitoyl cysteine moiety is linked to residue C126. The chain crosses the membrane as a helical span at residues 146-178; the sequence is GDAVHYLSFQRHIIGLLVVVGVLSVGIVLPVNF. The Extracellular portion of the chain corresponds to 179–202; it reads SGDLLENNAYSFGRTTIANLKSGN. Residues 203-227 traverse the membrane as a helical segment; it reads NLLWLHTSFAFLYLLLTVYSMRRHT. Residues 228–427 lie on the Cytoplasmic side of the membrane; that stretch reads SKMRYKEDDL…IYWEHLSIRG (200 aa). The segment at 231-426 is intracellular linker IL2; confers mechanosensitivity; sequence RYKEDDLVKR…NIYWEHLSIR (196 aa). S-palmitoyl cysteine attachment occurs at residues C382 and C398. The helical transmembrane segment at 428 to 457 threads the bilayer; sequence FIWWLRCLVINVVLFILLFFLTTPAIIITT. At 458-472 the chain is on the extracellular side; the sequence is MDKFNVTKPVEYLNN. N-linked (GlcNAc...) asparagine glycosylation occurs at N462. Residues 473-502 traverse the membrane as a helical segment; sequence PIITQFFPTLLLWCFSALLPTIVYYSAFFE. Topologically, residues 503–506 are cytoplasmic; the sequence is AHWT. A helical membrane pass occupies residues 507–543; the sequence is RSGENRTTMHKCYTFLIFMVLLLPSLGLSSLDLFFRW. Over 544–566 the chain is Extracellular; that stretch reads LFDKKFLAEAAIRFECVFLPDNG. A helical membrane pass occupies residues 567-599; sequence AFFVNYVIASAFIGNAMDLLRIPGLLMYMIRLC. The segment at 567-599 is gating helix; sequence AFFVNYVIASAFIGNAMDLLRIPGLLMYMIRLC. The Cytoplasmic segment spans residues 600–619; it reads LARSAAERRNVKRHQAYEFQ. The chain crosses the membrane as a helical span at residues 620–638; it reads FGAAYAWMMCVFTVVMTYS. Over 639 to 641 the chain is Extracellular; that stretch reads ITC. A helical membrane pass occupies residues 642-666; that stretch reads PIIVPFGLMYMLLKHLVDRYNLYYA. Topologically, residues 667 to 673 are cytoplasmic; the sequence is YLPAKLD. Residues 674–702 traverse the membrane as a helical segment; the sequence is KKIHSGAVNQVVAAPILCLFWLLFFSTMR. Topologically, residues 703-707 are extracellular; sequence TGFLA. The helical transmembrane segment at 708–728 threads the bilayer; that stretch reads PTSMFTFVVLVITIVICLCHV. S-palmitoyl cysteine attachment occurs at residues C726 and C729. Residues 729–832 lie on the Cytoplasmic side of the membrane; the sequence is CFGHFKYLSA…DSLIENEIHQ (104 aa). Disordered regions lie at residues 748 to 767 and 776 to 818; these read TDAV…AVPK and LQDS…DTDF. Residues 749–758 are compositionally biased toward polar residues; the sequence is DAVSSRSNGR. Low complexity predominate over residues 789–801; the sequence is PGSSGDEPPSSSS.

It belongs to the CSC1 (TC 1.A.17) family. In terms of assembly, monomer. Interacts with SLC19A2; interaction is required for the phospholipid scramblase activity. Palmitoylation is required for localization to the plasma membrane and stability. As to expression, expressed in cochlear hair cells (at protein level). Highly expressed in the subfornical organ of the brain. Expressed in small intestine. Brain-specific.

It localises to the cell membrane. The protein localises to the endoplasmic reticulum membrane. Its subcellular location is the lysosome membrane. It is found in the early endosome membrane. It catalyses the reaction Ca(2+)(in) = Ca(2+)(out). The catalysed reaction is Mg(2+)(in) = Mg(2+)(out). It carries out the reaction K(+)(in) = K(+)(out). The enzyme catalyses Na(+)(in) = Na(+)(out). It catalyses the reaction Cs(+)(in) = Cs(+)(out). The catalysed reaction is a 1,2-diacyl-sn-glycero-3-phosphocholine(in) = a 1,2-diacyl-sn-glycero-3-phosphocholine(out). It carries out the reaction a sphingomyelin(in) = a sphingomyelin(out). In terms of biological role, mechanosensitive cation channel with low conductance and high activation threshold. Osmosensitive cation channel preferentially activated by hypotonic stress. Also acts as a phospholipid scramblase in response to changes in membrane structure: upon changes in membrane curvature and thickness, alters its conformation and translocates phospholipids, such as phosphatidylcholine and sphingomyelin, thereby controlling plasma membrane lipid distribution. Forms a heterodimer with SLC19A2, which mediates phospholipid scramblase activity following Ca(2+) stimulation. Expressed in excitatory neurons of the subfornical organ and functions as a thirst receptor that mediates neuronal response to hyperosmolality to drive thirst and drinking behavior. Facilitates intestinal motility by promoting proliferation of intestinal stem cells. Essential for the baby's first breath and respiration throughout life. Upon lung inflation conducts cation currents in alveolar type 1 and 2 cells triggering lamellar body exocytosis and surfactant secretion into airspace. Acts as an osmosensor in cochlear outer hair cells (OHCs) where it mediates calcium influx and regulatory volume decrease response. Required for the maintenance of OHC morphology, OHC survival and normal hearing. Functionally, brain-specific osmosensitive calcium channel isoform. The chain is Mechanosensitive cation channel TMEM63B from Mus musculus (Mouse).